Consider the following 312-residue polypeptide: Bifunctional pinoresinol-lariciresinol reductase (312 aa).

Residues Gly-10–Gly-16, Arg-35, and Lys-44 each bind NADP(+). The active-site Proton acceptor is Lys-139. Arg-143 contributes to the NADP(+) binding site. Residue His-271 participates in substrate binding.

This sequence belongs to the NmrA-type oxidoreductase family. Isoflavone reductase subfamily. In terms of assembly, dimer. In terms of tissue distribution, expressed in young stems, young roots and petioles. In stems, expressed in radial parenchyma cells and in the cambial cells of developing secondary xylem.

The enzyme catalyses (+)-lariciresinol + NADP(+) = (+)-pinoresinol + NADPH + H(+). It carries out the reaction (-)-secoisolariciresinol + NADP(+) = (+)-lariciresinol + NADPH + H(+). Its function is as follows. Reductase involved in lignan biosynthesis. Catalyzes the enantioselective sequential conversion of (+)-pinoresinol into (+)-lariciresinol and of (+)-lariciresinol into (-)-secoisolariciresinol. Abstracts the 4R-hydride from the NADPH cofactor during catalysis. This chain is Bifunctional pinoresinol-lariciresinol reductase (PLR_Fi1), found in Forsythia intermedia (Border forsythia).